Reading from the N-terminus, the 458-residue chain is Glycogen synthase (458 aa).

ADP-alpha-D-glucose is bound at residue Lys-15.

Belongs to the glycosyltransferase 1 family. Bacterial/plant glycogen synthase subfamily.

It catalyses the reaction [(1-&gt;4)-alpha-D-glucosyl](n) + ADP-alpha-D-glucose = [(1-&gt;4)-alpha-D-glucosyl](n+1) + ADP + H(+). Its pathway is glycan biosynthesis; glycogen biosynthesis. Synthesizes alpha-1,4-glucan chains using ADP-glucose. This is Glycogen synthase from Gloeobacter violaceus (strain ATCC 29082 / PCC 7421).